The chain runs to 469 residues: ATP synthase subunit beta (469 aa).

Position 153 to 160 (153 to 160) interacts with ATP; sequence GGAGVGKT.

The protein belongs to the ATPase alpha/beta chains family. As to quaternary structure, F-type ATPases have 2 components, CF(1) - the catalytic core - and CF(0) - the membrane proton channel. CF(1) has five subunits: alpha(3), beta(3), gamma(1), delta(1), epsilon(1). CF(0) has three main subunits: a(1), b(2) and c(9-12). The alpha and beta chains form an alternating ring which encloses part of the gamma chain. CF(1) is attached to CF(0) by a central stalk formed by the gamma and epsilon chains, while a peripheral stalk is formed by the delta and b chains.

The protein localises to the cell inner membrane. It catalyses the reaction ATP + H2O + 4 H(+)(in) = ADP + phosphate + 5 H(+)(out). Functionally, produces ATP from ADP in the presence of a proton gradient across the membrane. The catalytic sites are hosted primarily by the beta subunits. The polypeptide is ATP synthase subunit beta (Pseudothermotoga lettingae (strain ATCC BAA-301 / DSM 14385 / NBRC 107922 / TMO) (Thermotoga lettingae)).